Reading from the N-terminus, the 119-residue chain is MAFDPASLTFDANGLIPAVAQDHATGEVLMMAWMNAEAVARTVETGCVTYWSRSRQAFWVKGETSGHVQRLIELRIDCDRDCLLLLIEQEGPACHTNRRSCFYTALREGEERIILDPMV.

Mg(2+) is bound at residue D77. Position 78 (C78) interacts with Zn(2+). The Mg(2+) site is built by D79 and D81. Residues C94 and C101 each coordinate Zn(2+).

It belongs to the PRA-CH family. In terms of assembly, homodimer. It depends on Mg(2+) as a cofactor. Zn(2+) serves as cofactor.

The protein localises to the cytoplasm. It catalyses the reaction 1-(5-phospho-beta-D-ribosyl)-5'-AMP + H2O = 1-(5-phospho-beta-D-ribosyl)-5-[(5-phospho-beta-D-ribosylamino)methylideneamino]imidazole-4-carboxamide. The protein operates within amino-acid biosynthesis; L-histidine biosynthesis; L-histidine from 5-phospho-alpha-D-ribose 1-diphosphate: step 3/9. Catalyzes the hydrolysis of the adenine ring of phosphoribosyl-AMP. The sequence is that of Phosphoribosyl-AMP cyclohydrolase from Cereibacter sphaeroides (strain ATCC 17023 / DSM 158 / JCM 6121 / CCUG 31486 / LMG 2827 / NBRC 12203 / NCIMB 8253 / ATH 2.4.1.) (Rhodobacter sphaeroides).